The chain runs to 382 residues: Alcohol dehydrogenase 4 (382 aa).

Residues aspartate 40, asparagine 72, glycine 99, serine 100, threonine 139, threonine 140, threonine 148, phenylalanine 150, lysine 161, and glycine 183 each coordinate NAD(+). Fe(2+) is bound by residues aspartate 195, histidine 199, and histidine 264. NAD(+) is bound by residues histidine 268 and histidine 278. Histidine 278 is a Fe(2+) binding site.

Belongs to the iron-containing alcohol dehydrogenase family. As to quaternary structure, homodimer. It depends on Zn(2+) as a cofactor. Requires Fe(2+) as cofactor.

Its subcellular location is the mitochondrion. The enzyme catalyses a primary alcohol + NAD(+) = an aldehyde + NADH + H(+). The catalysed reaction is ethanol + NAD(+) = acetaldehyde + NADH + H(+). With respect to regulation, inhibited by EDTA. Functionally, alcohol dehydrogenase specific for ethanol. Acts mainyl as a mitochondrial formaldehyde dehydrogenase and has no effect on ethanol production. Shows drastically reduced activity towards primary alcohols from 4 carbon atoms upward. Isomers of aliphatic alcohol, as well as secondary alcohols and glycerol are not used at all. The role of ADH4 in yeast metabolism is not yet known, but ADH4 is not responsible for the production of ethanol during growth on glucose nor responsible for the oxidation of ethanol to acetaldehyde. This Saccharomyces cerevisiae (strain ATCC 204508 / S288c) (Baker's yeast) protein is Alcohol dehydrogenase 4.